We begin with the raw amino-acid sequence, 22 residues long: 65 kDa membrane protein (22 aa).

Residues 1–22 (AAKPLDKSSSSLHHGYSKVHVP) are disordered.

It localises to the cell membrane. Its function is as follows. Binds various plasma and ECM-proteins. This Staphylococcus aureus protein is 65 kDa membrane protein.